The primary structure comprises 308 residues: Large ribosomal subunit protein mL38 (308 aa).

The N-terminal 17 residues, 1 to 17, are a transit peptide targeting the mitochondrion; that stretch reads MKRVWPRIPTISNVCRA.

It belongs to the phosphatidylethanolamine-binding protein family. Mitochondrion-specific ribosomal protein mL38 subfamily. As to quaternary structure, component of the mitochondrial large ribosomal subunit (mt-LSU). Mature yeast 74S mitochondrial ribosomes consist of a small (37S) and a large (54S) subunit. The 37S small subunit contains a 15S ribosomal RNA (15S mt-rRNA) and at least 32 different proteins. The 54S large subunit contains a 21S rRNA (21S mt-rRNA) and at least 45 different proteins.

It localises to the mitochondrion. In terms of biological role, component of the mitochondrial ribosome (mitoribosome), a dedicated translation machinery responsible for the synthesis of mitochondrial genome-encoded proteins, including at least some of the essential transmembrane subunits of the mitochondrial respiratory chain. The mitoribosomes are attached to the mitochondrial inner membrane and translation products are cotranslationally integrated into the membrane. The polypeptide is Large ribosomal subunit protein mL38 (mrpl35) (Schizosaccharomyces pombe (strain 972 / ATCC 24843) (Fission yeast)).